The sequence spans 207 residues: Ras-related protein Rab-5B (207 aa).

Gly-2 carries the N-myristoyl glycine lipid modification. Residues 41–49, 60–66, 90–94, 148–151, and 176–178 contribute to the GTP site; these read GDSGVGKSS, SEKHQVT, DTGGQ, NKKD, and SAK. Positions 63–71 match the Effector region motif; the sequence is HQVTIGAAF.

The protein belongs to the small GTPase superfamily. Rab family. In terms of assembly, interacts with CK1. May interact with ARF1. Myristoylation is required for cell membrane and food vacuole membrane localization. In terms of processing, may be palmitoylated on Cys-3. Post-translationally, lacks the C-terminal cysteine motifs subject to isoprenylation present in mammalian RAB5B homolog.

The protein resides in the cell membrane. It is found in the vacuole membrane. Its subcellular location is the vesicle. It catalyses the reaction GTP + H2O = GDP + phosphate + H(+). Alternates between an inactive GDP-bound form and an active GTP-bound form. Activated by guanine nucleotide-exchange factors (GEFs) and inactivated by GTPase-activating proteins (GAPs). Small GTPase which regulates vesicle trafficking between organelles. May be involved in the trafficking of the N-myristoylated AK2 from the endoplasmic reticulum to the parasitophorous vacuole membrane. The protein is Ras-related protein Rab-5B of Plasmodium falciparum (isolate 3D7).